Here is a 318-residue protein sequence, read N- to C-terminus: NADH-ubiquinone oxidoreductase chain 1 (318 aa).

8 helical membrane-spanning segments follow: residues 3 to 23 (LINVLSLIIPILLAVAFLTLL), 69 to 89 (LMFTLAPTLALTLALSLWIPI), 100 to 120 (LGVLFILAMSSLAVYSILWSG), 135 to 155 (AVAQTISYEVTLAIILLSIMM), 171 to 191 (HMWLIFPLWPLAMMWFISTLA), 223 to 243 (FFLAEYANIIMMNALTAILFF), 253 to 273 (ELHTLNLITKTLILTMMFLWV), and 293 to 313 (FLPLTLALCMLHVSAPATFAG).

The protein belongs to the complex I subunit 1 family.

The protein resides in the mitochondrion inner membrane. It carries out the reaction a ubiquinone + NADH + 5 H(+)(in) = a ubiquinol + NAD(+) + 4 H(+)(out). Core subunit of the mitochondrial membrane respiratory chain NADH dehydrogenase (Complex I) that is believed to belong to the minimal assembly required for catalysis. Complex I functions in the transfer of electrons from NADH to the respiratory chain. The immediate electron acceptor for the enzyme is believed to be ubiquinone. This chain is NADH-ubiquinone oxidoreductase chain 1 (MT-ND1), found in Dasypus novemcinctus (Nine-banded armadillo).